We begin with the raw amino-acid sequence, 159 residues long: G-protein-signaling modulator 3 (159 aa).

A disordered region spans residues 1–54 (MEAERPQEEDGEQSLPQDDQGWPPVNATARPWRSAPPSPPPPGTRHTALGPRSG). Serine 34, serine 38, serine 55, and serine 58 each carry phosphoserine. Residues 34 to 43 (SAPPSPPPPG) show a composition bias toward pro residues. At threonine 61 the chain carries Phosphothreonine. A GoLoco 1 domain is found at 61–83 (TELLLDLVAEAQSRRLEEQRATF). Residues 77-97 (EEQRATFHTPEAPPNLAPAPP) are disordered. Residues 87 to 97 (EAPPNLAPAPP) are compositionally biased toward pro residues. 2 GoLoco domains span residues 103-125 (KEQLYSTILSHQCQRIEAQRSDP) and 131-154 (GQELLELLLRVQGGGRMEEQRSRP).

Its subcellular location is the cytoplasm. Interacts with subunit of G(i) alpha proteins and regulates the activation of G(i) alpha proteins. The chain is G-protein-signaling modulator 3 (Gpsm3) from Mus musculus (Mouse).